Reading from the N-terminus, the 886-residue chain is DNA repair and recombination protein RAD54B (886 aa).

Residues Met-1–Gly-12 are compositionally biased toward polar residues. A disordered region spans residues Met-1–Ala-95. Ser-14 carries the post-translational modification Phosphoserine. Over residues Ala-47–Cys-62 the composition is skewed to polar residues. Basic and acidic residues-rich tracts occupy residues Ile-67 to Arg-76 and Ala-86 to Ala-95. A Helicase ATP-binding domain is found at Gly-291–Gly-458. Asp-304–Thr-311 provides a ligand contact to ATP. The short motif at Asp-409–His-412 is the DEGH box element. The 162-residue stretch at Lys-627–Lys-788 folds into the Helicase C-terminal domain.

This sequence belongs to the SNF2/RAD54 helicase family. As to quaternary structure, interacts with RAD51 through the NH2-terminal domain.

Its subcellular location is the nucleus. Functionally, involved in DNA repair and mitotic recombination. May play an active role in recombination processes in concert with other members of the RAD52 epistasis group. In Mus musculus (Mouse), this protein is DNA repair and recombination protein RAD54B (Rad54b).